A 388-amino-acid polypeptide reads, in one-letter code: Chorismate synthase (388 aa).

2 residues coordinate NADP(+): Arg-39 and Arg-45. Residues 130-132, 251-252, Gly-296, 311-315, and Arg-337 each bind FMN; these read RSS, NA, and KPIPT.

The protein belongs to the chorismate synthase family. In terms of assembly, homotetramer. It depends on FMNH2 as a cofactor.

It catalyses the reaction 5-O-(1-carboxyvinyl)-3-phosphoshikimate = chorismate + phosphate. It functions in the pathway metabolic intermediate biosynthesis; chorismate biosynthesis; chorismate from D-erythrose 4-phosphate and phosphoenolpyruvate: step 7/7. Catalyzes the anti-1,4-elimination of the C-3 phosphate and the C-6 proR hydrogen from 5-enolpyruvylshikimate-3-phosphate (EPSP) to yield chorismate, which is the branch point compound that serves as the starting substrate for the three terminal pathways of aromatic amino acid biosynthesis. This reaction introduces a second double bond into the aromatic ring system. In Lactococcus lactis subsp. lactis (strain IL1403) (Streptococcus lactis), this protein is Chorismate synthase.